A 215-amino-acid chain; its full sequence is Ras-related protein Rab-5B (215 aa).

GTP is bound by residues S29, A30, G32, K33, S34, S35, H46, E47, T52, G78, N133, K134, D136, A164, and K165. S34 serves as a coordination point for Mg(2+). 2 short sequence motifs (switch) span residues 44–56 (QFHE…IGAA) and 77–93 (AGQE…YRGA). T52 serves as a coordination point for Mg(2+). The disordered stretch occupies residues 184-215 (SEPQSTSGAAGRSRGVDLHEQTQQNKSQCCSN). Residues 204 to 215 (QTQQNKSQCCSN) show a composition bias toward polar residues. S-geranylgeranyl cysteine attachment occurs at residues C212 and C213.

It belongs to the small GTPase superfamily. Rab family. Mg(2+) is required as a cofactor.

It is found in the cell membrane. It localises to the early endosome membrane. The enzyme catalyses GTP + H2O = GDP + phosphate + H(+). Regulated by guanine nucleotide exchange factors (GEFs) which promote the exchange of bound GDP for free GTP. Regulated by GTPase activating proteins (GAPs) which increase the GTP hydrolysis activity. Inhibited by GDP dissociation inhibitors (GDIs). In terms of biological role, the small GTPases Rab are key regulators of intracellular membrane trafficking, from the formation of transport vesicles to their fusion with membranes. Rabs cycle between an inactive GDP-bound form and an active GTP-bound form that is able to recruit to membranes different sets of downstream effectors directly responsible for vesicle formation, movement, tethering and fusion. The sequence is that of Ras-related protein Rab-5B (RAB5B) from Gallus gallus (Chicken).